A 698-amino-acid chain; its full sequence is Voltage-dependent calcium channel beta subunit-associated regulatory protein (698 aa).

Topologically, residues 1 to 41 (MQPTATMATAAATTATVALTTSWDNATSRPTAEPDPILDNY) are extracellular. The N-linked (GlcNAc...) asparagine glycan is linked to Asn-25. Residues 42–62 (VLLVVVMSLFVGGTLVVLSGV) traverse the membrane as a helical; Signal-anchor for type III membrane protein segment. Over 63 to 698 (LLLCKRCWEV…APTSPDHSPA (636 aa)) the chain is Cytoplasmic. Disordered stretches follow at residues 90–124 (YLDNGTHPIQDPDCRGEDPEGQDTETERFLATSST) and 185–275 (ASAA…SSGS). Low complexity predominate over residues 185-197 (ASAAATPHPATTS). Phosphoserine occurs at positions 290 and 295. 4 disordered regions span residues 308–339 (SQRASSLDTRGSPKRHHFQRQRAASESMEQEG), 360–421 (PPPR…HAQC), 438–536 (ATAS…RRDY), and 554–648 (PHFD…GSGL). Residues 360–375 (PPPRPFLASPTSPPPT) are compositionally biased toward pro residues. Residues 402-413 (PEHAQQQDPQQE) are compositionally biased toward low complexity. The segment covering 459 to 468 (SGSGSGGGGA) has biased composition (gly residues). Residues 471–482 (AFPPPPESPPAL) show a composition bias toward pro residues. The segment covering 483 to 493 (RPKDGEARRLL) has biased composition (basic and acidic residues). Residues Ser-501, Ser-520, and Ser-524 each carry the phosphoserine modification. Residues 562–576 (HRTRAHPHTHARKQW) are compositionally biased toward basic residues. Position 610 is a phosphoserine (Ser-610). Phosphothreonine is present on Thr-691. A phosphoserine mark is found at Ser-692 and Ser-696.

Interacts with voltage-dependent calcium channels CACNB1, CACNB2, CACNB3 and CACNB4 beta subunits; prevents their interaction with the CACNA1C alpha subunit thereby negatively regulating the activity of the corresponding calcium channels. In terms of tissue distribution, expressed by neurons in the cortex, cerebellum and hippocampus and by pancreatic beta cells (at protein level).

It localises to the cytoplasmic vesicle. It is found in the secretory vesicle. The protein resides in the synaptic vesicle membrane. Its subcellular location is the cell membrane. The protein localises to the cell projection. It localises to the growth cone. Functionally, negatively regulates voltage-gated calcium channels by preventing the interaction between their alpha and beta subunits. Thereby, negatively regulates calcium channels activity at the plasma membrane and indirectly inhibits calcium-regulated exocytosis. This is Voltage-dependent calcium channel beta subunit-associated regulatory protein from Mus musculus (Mouse).